We begin with the raw amino-acid sequence, 526 residues long: Estrogen receptor beta (526 aa).

The interval 1–145 is modulating; it reads MDIKNSPSNL…SPSSKRDAHF (145 aa). Phosphoserine; by MAPK occurs at positions 84 and 102. NR C4-type zinc fingers lie at residues 146 to 166 and 182 to 206; these read CAVC…CEGC and CPAT…LRKC. Residues 146–211 constitute a DNA-binding region (nuclear receptor); it reads CAVCSDYASG…RLRKCYEVGM (66 aa). An NR LBD domain is found at 261–494; that stretch reads SPEQLVLTLL…DLLLEMLNAH (234 aa). The disordered stretch occupies residues 502-526; it reads LVTGSERSRMEESESKEGSQKPQAQ. The span at 507–520 shows a compositional bias: basic and acidic residues; the sequence is ERSRMEESESKEGS.

This sequence belongs to the nuclear hormone receptor family. NR3 subfamily. As to quaternary structure, binds DNA as a homodimer. Can form a heterodimer with ESR1. Interacts with NCOA1, NCOA3, NCOA5 and NCOA6 coactivators, leading to a strong increase of transcription of target genes. Interacts with UBE1C and AKAP13. Interacts with DNTTIP2. Interacts with CCDC62 in the presence of estradiol/E2; this interaction seems to enhance the transcription of target genes. Interacts with DNAAF4. Interacts with PRMT2. Interacts with CCAR2 (via N-terminus) in a ligand-independent manner. Interacts with RBM39, in the presence of estradiol (E2). Interacts with STUB1/CHIP. In terms of processing, phosphorylation at Ser-84 and Ser-102 recruits NCOA1.

The protein resides in the nucleus. In terms of biological role, nuclear hormone receptor. Binds estrogens with an affinity similar to that of ESR1/ER-alpha, and activates expression of reporter genes containing estrogen response elements (ERE) in an estrogen-dependent manner. The chain is Estrogen receptor beta (ESR2) from Sus scrofa (Pig).